The sequence spans 196 residues: V-type proton ATPase subunit E (196 aa).

This sequence belongs to the V-ATPase E subunit family.

Functionally, produces ATP from ADP in the presence of a proton gradient across the membrane. This is V-type proton ATPase subunit E from Clostridium botulinum (strain Eklund 17B / Type B).